Reading from the N-terminus, the 208-residue chain is Ribosome maturation factor RimP (208 aa).

A disordered region spans residues 189 to 208 (EAPETGATTMARDGSEEETK).

It belongs to the RimP family.

The protein localises to the cytoplasm. Functionally, required for maturation of 30S ribosomal subunits. In Ruegeria pomeroyi (strain ATCC 700808 / DSM 15171 / DSS-3) (Silicibacter pomeroyi), this protein is Ribosome maturation factor RimP.